The sequence spans 162 residues: Troponin C, skeletal muscle (162 aa).

At A1 the chain carries N-acetylalanine. 4 consecutive EF-hand domains span residues 17–52 (EMIA…LGQT), 53–88 (PTKE…QMKE), 93–128 (KSEE…SGES), and 129–162 (ITDE…EGVQ). Ca(2+) is bound by residues D30, D32, D36, E41, D66, D68, S70, T72, E77, D106, N108, D110, Y112, E117, D142, N144, D146, K148, and E153.

The protein belongs to the troponin C family.

Functionally, troponin is the central regulatory protein of striated muscle contraction. Tn consists of three components: Tn-I which is the inhibitor of actomyosin ATPase, Tn-T which contains the binding site for tropomyosin and Tn-C. The binding of calcium to Tn-C abolishes the inhibitory action of Tn on actin filaments. The polypeptide is Troponin C, skeletal muscle (Pelophylax lessonae (Pool frog)).